The sequence spans 267 residues: MDRREFTASLVAGGCAGMCVDLTLFPLDTIKTRLQSQQGFYKAGGFRGIYAGVPSAAIGSFPNAAAFFVTYESTKSVFSGYTTTNLAPITHMLAASLGEIVACLIRVPTEVVKQRTQANPSISTYRVLLNSLQEEGFRGLYRGYGSTVLREIPFSLVQFPLWEYLKAVWWRRQGGRLDSWQAAVCGALAGGVAAFVTTPLDVAKTWIMLAKAGTSTASGNIPMVLCEVWRSRGIPGLFAGSIPRVMFISMGGFIFLGAYEKVRRTLL.

3 Solcar repeats span residues 4–77, 86–168, and 177–265; these read REFT…TKSV, LAPI…LKAV, and LDSW…VRRT. Transmembrane regions (helical) follow at residues 5–25, 49–69, 85–105, 142–162, 182–202, and 238–258; these read EFTA…LTLF, IYAG…AFFV, NLAP…ACLI, RGYG…FPLW, AAVC…PLDV, and FAGS…FLGA.

It belongs to the mitochondrial carrier (TC 2.A.29) family.

The protein localises to the mitochondrion inner membrane. The enzyme catalyses S-adenosyl-L-homocysteine(out) + S-adenosyl-L-methionine(in) = S-adenosyl-L-homocysteine(in) + S-adenosyl-L-methionine(out). Functionally, mitochondrial S-adenosyl-L-methionine/S-adenosyl-L-homocysteine antiporter. Mediates the exchange of cytosolic S-adenosyl-L-methionine, the predominant methyl-group donor for macromolecule methylation processes, for mitochondrial S-adenosylhomocysteine(SAH), a by-product of methylation reactions. The sequence is that of Mitochondrial S-adenosylmethionine carrier protein (slc25a26) from Danio rerio (Zebrafish).